The primary structure comprises 273 residues: Undecaprenyl-diphosphatase (273 aa).

Transmembrane regions (helical) follow at residues 6–26, 45–65, 90–110, 116–136, 190–210, 222–242, and 252–272; these read SLLI…LPVS, AKTF…VMFW, LTLI…LLFH, LFNP…LIAA, YAAS…ATAL, GDIP…LIAI, and ISFI…YVVF.

It belongs to the UppP family.

It is found in the cell inner membrane. It catalyses the reaction di-trans,octa-cis-undecaprenyl diphosphate + H2O = di-trans,octa-cis-undecaprenyl phosphate + phosphate + H(+). Catalyzes the dephosphorylation of undecaprenyl diphosphate (UPP). Confers resistance to bacitracin. The protein is Undecaprenyl-diphosphatase of Escherichia coli O139:H28 (strain E24377A / ETEC).